Reading from the N-terminus, the 293-residue chain is ADP-forming sulfoacetate-CoA ligase subunit SauD (293 aa).

Residues 17-20, Lys-43, and 96-98 contribute to the CoA site; these read TGKE and IAD. Residue His-251 is the Tele-phosphohistidine intermediate of the active site.

Belongs to the succinate/malate CoA ligase alpha subunit family. Forms a complex with SauC.

The catalysed reaction is sulfoacetate + ATP + CoA = sulfoacetyl-CoA + ADP + phosphate. Involved in the degradation of sulfoacetate. Catalyzes the CoA- and ATP-dependent conversion of sulfoacetate to sulfoacetyl-CoA and ADP. Cannot use other sulfonic and carboxylic acids, and shows only residual activity with 3-sulfopropanoate and malonic acid. The protein is ADP-forming sulfoacetate-CoA ligase subunit SauD of Bilophila wadsworthia (strain 3_1_6).